We begin with the raw amino-acid sequence, 303 residues long: Dihydroorotate dehydrogenase B (NAD(+)), catalytic subunit (303 aa).

Substrate is bound by residues K46, 70–74, and N124; that span reads NAIGL. Residue 46-47 coordinates FMN; it reads KS. Residue N124 participates in FMN binding. The Nucleophile role is filled by C127. 2 residues coordinate FMN: K163 and I189. 190–191 provides a ligand contact to substrate; sequence NS. FMN is bound by residues G216, 242 to 243, and 264 to 265; these read GG and GT.

The protein belongs to the dihydroorotate dehydrogenase family. Type 1 subfamily. As to quaternary structure, heterotetramer of 2 PyrK and 2 PyrD type B subunits. The cofactor is FMN.

Its subcellular location is the cytoplasm. It carries out the reaction (S)-dihydroorotate + NAD(+) = orotate + NADH + H(+). It functions in the pathway pyrimidine metabolism; UMP biosynthesis via de novo pathway; orotate from (S)-dihydroorotate (NAD(+) route): step 1/1. Its function is as follows. Catalyzes the conversion of dihydroorotate to orotate with NAD(+) as electron acceptor. The chain is Dihydroorotate dehydrogenase B (NAD(+)), catalytic subunit (pyrD) from Methanothermobacter thermautotrophicus (strain ATCC 29096 / DSM 1053 / JCM 10044 / NBRC 100330 / Delta H) (Methanobacterium thermoautotrophicum).